We begin with the raw amino-acid sequence, 115 residues long: Large ribosomal subunit protein bL19 (115 aa).

The protein belongs to the bacterial ribosomal protein bL19 family.

In terms of biological role, this protein is located at the 30S-50S ribosomal subunit interface and may play a role in the structure and function of the aminoacyl-tRNA binding site. This Streptococcus gordonii (strain Challis / ATCC 35105 / BCRC 15272 / CH1 / DL1 / V288) protein is Large ribosomal subunit protein bL19.